The sequence spans 341 residues: Ketol-acid reductoisomerase (NADP(+)) (341 aa).

The 180-residue stretch at 2 to 181 (AKVYYNGDAN…GAARAGVLET (180 aa)) folds into the KARI N-terminal Rossmann domain. NADP(+) is bound by residues 25-28 (YGSQ), arginine 48, serine 52, and 82-85 (DEKQ). Histidine 107 is a catalytic residue. Glycine 133 lines the NADP(+) pocket. One can recognise a KARI C-terminal knotted domain in the interval 182–327 (TFKEETETDL…RELRSMMPFV (146 aa)). 4 residues coordinate Mg(2+): aspartate 190, glutamate 194, glutamate 226, and glutamate 230. Serine 251 serves as a coordination point for substrate.

Belongs to the ketol-acid reductoisomerase family. Mg(2+) is required as a cofactor.

It carries out the reaction (2R)-2,3-dihydroxy-3-methylbutanoate + NADP(+) = (2S)-2-acetolactate + NADPH + H(+). The enzyme catalyses (2R,3R)-2,3-dihydroxy-3-methylpentanoate + NADP(+) = (S)-2-ethyl-2-hydroxy-3-oxobutanoate + NADPH + H(+). Its pathway is amino-acid biosynthesis; L-isoleucine biosynthesis; L-isoleucine from 2-oxobutanoate: step 2/4. It functions in the pathway amino-acid biosynthesis; L-valine biosynthesis; L-valine from pyruvate: step 2/4. In terms of biological role, involved in the biosynthesis of branched-chain amino acids (BCAA). Catalyzes an alkyl-migration followed by a ketol-acid reduction of (S)-2-acetolactate (S2AL) to yield (R)-2,3-dihydroxy-isovalerate. In the isomerase reaction, S2AL is rearranged via a Mg-dependent methyl migration to produce 3-hydroxy-3-methyl-2-ketobutyrate (HMKB). In the reductase reaction, this 2-ketoacid undergoes a metal-dependent reduction by NADPH to yield (R)-2,3-dihydroxy-isovalerate. This is Ketol-acid reductoisomerase (NADP(+)) from Geobacillus thermodenitrificans (strain NG80-2).